The chain runs to 342 residues: L-threonine 3-dehydrogenase (342 aa).

Zn(2+) is bound at residue C39. Residues T41 and H44 each act as charge relay system in the active site. Zn(2+)-binding residues include H64, E65, C94, C97, C100, and C108. Residues I176, D196, R201, 263 to 265 (LGI), and 287 to 288 (IY) each bind NAD(+).

The protein belongs to the zinc-containing alcohol dehydrogenase family. Homotetramer. It depends on Zn(2+) as a cofactor.

It is found in the cytoplasm. The catalysed reaction is L-threonine + NAD(+) = (2S)-2-amino-3-oxobutanoate + NADH + H(+). It participates in amino-acid degradation; L-threonine degradation via oxydo-reductase pathway; glycine from L-threonine: step 1/2. Functionally, catalyzes the NAD(+)-dependent oxidation of L-threonine to 2-amino-3-ketobutyrate. This is L-threonine 3-dehydrogenase from Protochlamydia amoebophila (strain UWE25).